Consider the following 349-residue polypeptide: Protein MULTIPLE CHLOROPLAST DIVISION SITE 1 (349 aa).

Residues 1–52 constitute a chloroplast transit peptide; sequence MASIDSLQFHSLCNLQSSIGRAKLQNPSSLVIFRRRPVNLNWVQFETKGSFV. The Chloroplast intermembrane segment spans residues 53-116; sequence CKAIGDSSTP…VVFLMKKCSV (64 aa). A helical membrane pass occupies residues 117–139; the sequence is NSIWIGVCITATVLVAAIRAYVV. Over 140 to 349 the chain is Stromal; the sequence is RKSRDNQRAG…NSSSEETHKS (210 aa). The interval 315–349 is disordered; the sequence is QRPYKFSAKLEGENIQKNSQENHTGNSSSEETHKS. Over residues 329–343 the composition is skewed to polar residues; it reads IQKNSQENHTGNSSS.

Interacts with MIND1. Interacts with ARC6 in the chloroplast stroma and binds to FtsZ2-1 in an ARC6-dependent manner.

Its subcellular location is the plastid. The protein localises to the chloroplast inner membrane. In terms of biological role, required for chloroplast division. Together with MIND1 and ARC3, regulates FtsZ ring positioning in chloroplasts in an ARC6-dependent manner. Determines the site of chloroplast division in concert with MIND1. Not directly involved in ring formation, but required for MIND1 and MINE1 localization to regulate FtsZ ring formation during plastidial constriction. The protein is Protein MULTIPLE CHLOROPLAST DIVISION SITE 1 of Arabidopsis thaliana (Mouse-ear cress).